The chain runs to 336 residues: Dihydroorotate dehydrogenase (quinone) (336 aa).

FMN-binding positions include Ala-62–Lys-66 and Thr-86. Substrate is bound at residue Lys-66. A substrate-binding site is contributed by Asn-111–Phe-115. Residues Asn-139 and Asn-172 each coordinate FMN. Asn-172 provides a ligand contact to substrate. Ser-175 (nucleophile) is an active-site residue. Residue Asn-177 participates in substrate binding. Residues Lys-217 and Thr-245 each contribute to the FMN site. Asn-246–Thr-247 contributes to the substrate binding site. FMN contacts are provided by residues Gly-268, Gly-297, and Tyr-318–Ser-319.

It belongs to the dihydroorotate dehydrogenase family. Type 2 subfamily. Monomer. Requires FMN as cofactor.

Its subcellular location is the cell membrane. The enzyme catalyses (S)-dihydroorotate + a quinone = orotate + a quinol. Its pathway is pyrimidine metabolism; UMP biosynthesis via de novo pathway; orotate from (S)-dihydroorotate (quinone route): step 1/1. Catalyzes the conversion of dihydroorotate to orotate with quinone as electron acceptor. The sequence is that of Dihydroorotate dehydrogenase (quinone) from Escherichia coli (strain UTI89 / UPEC).